The primary structure comprises 557 residues: Tight junction-associated protein 1 (557 aa).

Positions 1 to 37 are disordered; sequence MTSAAPAKKPYRKAPPEHRELRLEIPGSRLEQEEPLT. Thr-2 bears the N-acetylthreonine mark. The segment covering 14 to 23 has biased composition (basic and acidic residues); the sequence is APPEHRELRL. Residues 42–171 adopt a coiled-coil conformation; sequence MKLLQEENEE…EELNERYRLD (130 aa). Disordered stretches follow at residues 266–303 and 309–328; these read MSEG…SPEE and AFEK…LYPG. The span at 274–286 shows a compositional bias: pro residues; that stretch reads PASPPAPGSPTPQ. Ser-300 is modified (phosphoserine). Residues 316 to 325 show a composition bias toward pro residues; sequence YPTPSPPHPL. Thr-318 carries the post-translational modification Phosphothreonine. Phosphoserine is present on residues Ser-320 and Ser-345. The tract at residues 364–409 is disordered; the sequence is EEGSERARPSPVPSTPASAQASPHHQPSPAPLTLSAPASSASSEED. Over residues 378-388 the composition is skewed to polar residues; the sequence is TPASAQASPHH. The span at 394–405 shows a compositional bias: low complexity; the sequence is PLTLSAPASSAS. Thr-422 carries the phosphothreonine modification. The segment covering 439–456 has biased composition (basic and acidic residues); that stretch reads LPELQRHFAHSPADRDEV. A disordered region spans residues 439–557; that stretch reads LPELQRHFAH…QAQEQGNLLN (119 aa). Ser-491 carries the post-translational modification Phosphoserine. Positions 530-542 are enriched in basic residues; sequence RSPKRMGVHHLHR. Ser-545 carries the post-translational modification Phosphoserine. Positions 546-557 are enriched in polar residues; the sequence is LTQAQEQGNLLN.

In terms of assembly, interacts with DLG1. Interacts with ARF6 (GTP-bound form). In terms of tissue distribution, ubiquitously expressed.

The protein resides in the golgi apparatus. The protein localises to the trans-Golgi network. It localises to the cell junction. It is found in the tight junction. Its subcellular location is the cell membrane. In terms of biological role, plays a role in regulating the structure of the Golgi apparatus. This Homo sapiens (Human) protein is Tight junction-associated protein 1.